Reading from the N-terminus, the 117-residue chain is NADH dehydrogenase [ubiquinone] 1 beta subcomplex subunit 9 (117 aa).

S2 is modified (N-acetylserine).

It belongs to the complex I LYR family. Complex I is composed of at least 49 different subunits. Expressed in roots, stems, flowers, rosette leaves, cauline leaves and siliques, with the highest expression in the stems.

The protein localises to the mitochondrion inner membrane. In terms of biological role, accessory subunit of the mitochondrial membrane respiratory chain NADH dehydrogenase (Complex I), that is believed to be not involved in catalysis. Complex I functions in the transfer of electrons from NADH to the respiratory chain. The immediate electron acceptor for the enzyme is believed to be ubiquinone. Is required for correct plant growth and development. This is NADH dehydrogenase [ubiquinone] 1 beta subcomplex subunit 9 (CIB22) from Arabidopsis thaliana (Mouse-ear cress).